Here is a 67-residue protein sequence, read N- to C-terminus: Protein AaeX (67 aa).

Helical transmembrane passes span 3–23 (LFPV…ELLL) and 43–63 (FVWH…YLIS).

This sequence belongs to the AaeX family.

It localises to the cell membrane. The sequence is that of Protein AaeX from Salmonella agona (strain SL483).